Here is a 412-residue protein sequence, read N- to C-terminus: Gamma-glutamyl phosphate reductase (412 aa).

Belongs to the gamma-glutamyl phosphate reductase family.

It localises to the cytoplasm. It carries out the reaction L-glutamate 5-semialdehyde + phosphate + NADP(+) = L-glutamyl 5-phosphate + NADPH + H(+). It functions in the pathway amino-acid biosynthesis; L-proline biosynthesis; L-glutamate 5-semialdehyde from L-glutamate: step 2/2. Functionally, catalyzes the NADPH-dependent reduction of L-glutamate 5-phosphate into L-glutamate 5-semialdehyde and phosphate. The product spontaneously undergoes cyclization to form 1-pyrroline-5-carboxylate. This Aliarcobacter butzleri (strain RM4018) (Arcobacter butzleri) protein is Gamma-glutamyl phosphate reductase.